Reading from the N-terminus, the 305-residue chain is Ribonuclease BN (305 aa).

Residues H64, H66, D68, H69, H141, D212, and H270 each contribute to the Zn(2+) site. The active-site Proton acceptor is D68.

This sequence belongs to the RNase Z family. RNase BN subfamily. In terms of assembly, homodimer. Zn(2+) is required as a cofactor.

Functionally, zinc phosphodiesterase, which has both exoribonuclease and endoribonuclease activities. This chain is Ribonuclease BN, found in Shigella flexneri.